A 365-amino-acid polypeptide reads, in one-letter code: Transcription factor TCP2 (365 aa).

The TCP domain occupies 42-100; it reads GKDRHSKVLTSKGPRDRRVRLSVSTALQFYDLQDRLGYDQPSKAVEWLIKAAEDSISEL. Over residues 130-150 the composition is skewed to low complexity; that stretch reads KSACSSNSDTSKNSSGLSLSR. 2 disordered regions span residues 130–202 and 220–245; these read KSAC…SAPS and QTHFPISTNSHPFSSISDHHHHHPHH. Residues 151–172 enclose the R domain; it reads SELRDKARERARERTAKETKER. The span at 151–176 shows a compositional bias: basic and acidic residues; it reads SELRDKARERARERTAKETKERDHNH. Positions 177 to 202 are enriched in polar residues; sequence TSFTDLLNSGSDPVNSNRQWMASAPS.

As to quaternary structure, interacts with SPL. Interacts with CRY1. Expressed in cotyledons, particularly in the vascular region, in leaves, roots, buds, flowers and immature siliques.

The protein resides in the nucleus. Its function is as follows. Plays a pivotal role in the control of morphogenesis of shoot organs by negatively regulating the expression of boundary-specific genes such as CUC genes, probably through the induction of miRNA (e.g. miR164). Participates in ovule development. Promotes light-regulated transcription of CHS, CAB, HYH and HY5. Positively regulates photomorphogenesis (e.g. hypocotyl elongation inhibition and cotyledon opening in response to blue light). The protein is Transcription factor TCP2 of Arabidopsis thaliana (Mouse-ear cress).